A 114-amino-acid polypeptide reads, in one-letter code: Evasin P1096 (114 aa).

A signal peptide spans 1 to 23 (MELNAFTILHIAVFIAVGYYANT). 3 disulfides stabilise this stretch: Cys47–Cys65, Cys51–Cys67, and Cys61–Cys78. Residue Asn50 is glycosylated (N-linked (GlcNAc...) asparagine). A disordered region spans residues 89-114 (DPSQDPSIDEAAPRESVSKRRSNGES). Basic and acidic residues predominate over residues 99–114 (AAPRESVSKRRSNGES).

It localises to the secreted. Salivary chemokine-binding protein which binds to host chemokine CXCL8. The chain is Evasin P1096 from Ixodes ricinus (Common tick).